Here is a 512-residue protein sequence, read N- to C-terminus: Methionine--tRNA ligase (512 aa).

The short motif at 11–21 (YYASGKPHIGH) is the 'HIGH' region element. Zn(2+)-binding residues include C126, C129, C143, and H147. The 'KMSKS' region signature appears at 301 to 305 (KMSKS). K304 is an ATP binding site.

It belongs to the class-I aminoacyl-tRNA synthetase family. MetG type 2A subfamily. As to quaternary structure, monomer. The cofactor is Zn(2+).

The protein localises to the cytoplasm. The enzyme catalyses tRNA(Met) + L-methionine + ATP = L-methionyl-tRNA(Met) + AMP + diphosphate. Is required not only for elongation of protein synthesis but also for the initiation of all mRNA translation through initiator tRNA(fMet) aminoacylation. This chain is Methionine--tRNA ligase (metG), found in Mycoplasma pneumoniae (strain ATCC 29342 / M129 / Subtype 1) (Mycoplasmoides pneumoniae).